The chain runs to 474 residues: Glutamate--tRNA ligase (474 aa).

The 'HIGH' region signature appears at 9-19 (PSPTGFLHVGG). Residues 240–244 (KLSKR) carry the 'KMSKS' region motif. Position 243 (Lys-243) interacts with ATP.

It belongs to the class-I aminoacyl-tRNA synthetase family. Glutamate--tRNA ligase type 1 subfamily. As to quaternary structure, monomer.

It localises to the cytoplasm. The enzyme catalyses tRNA(Glu) + L-glutamate + ATP = L-glutamyl-tRNA(Glu) + AMP + diphosphate. In terms of biological role, catalyzes the attachment of glutamate to tRNA(Glu) in a two-step reaction: glutamate is first activated by ATP to form Glu-AMP and then transferred to the acceptor end of tRNA(Glu). The polypeptide is Glutamate--tRNA ligase (Photobacterium profundum (strain SS9)).